A 151-amino-acid polypeptide reads, in one-letter code: Odorant-binding protein (151 aa).

2 disulfides stabilise this stretch: cysteine 38/cysteine 42 and cysteine 57/cysteine 149.

It belongs to the calycin superfamily. Lipocalin family. As to expression, expressed in salivary glands, hair and urine.

The protein localises to the secreted. Its function is as follows. May act as a pheromone. The sequence is that of Odorant-binding protein from Phodopus sungorus (Striped hairy-footed hamster).